The following is a 152-amino-acid chain: Snaclec anticoagulant protein subunit A (152 aa).

The first 23 residues, 1–23 (MGRFIFVSFGLLVVYLSLSGTAA), serve as a signal peptide directing secretion. Residues 24-152 (DCSSSWSSYE…EQRDPFVCEA (129 aa)) form the C-type lectin domain. 3 disulfide bridges follow: Cys25–Cys36, Cys53–Cys150, and Cys125–Cys142. The Ca(2+) site is built by Ser64, Glu66, and Glu70. A Ca(2+)-binding site is contributed by Glu151.

Belongs to the snaclec family. In terms of assembly, heterodimer of subunits A and B; disulfide-linked. As to expression, expressed by the venom gland.

Its subcellular location is the secreted. Anticoagulant protein which binds to the gamma-carboxyglutamic acid-domain regions of factors IX and factor X in the presence of calcium with a 1 to 1 stoichiometry. Also inhibits platelet aggregation by binding to platelet glycoprotein Ibalpha (GP1BA) and functioning as a blocker of vWF. Is devoid of hemorrhagic and lethal activities. Possesses antithrombotic and thrombolytic activities. Also hydrolyzes the Aalpha-chain of fibrinogen. Does not affect the Bbeta-chain and the gamma chain. The polypeptide is Snaclec anticoagulant protein subunit A (Deinagkistrodon acutus (Hundred-pace snake)).